Consider the following 361-residue polypeptide: MKAKVIVGMSGGVDSSVAAWLLKEQGYQVEGLFMKNWEQDDHNDYCPAAKDLADAQAVCNQLRIPLHTVNFSKEYWDRVFAYFLSEYEKGRTPNPDVLCNKEIKFNAFLNYALTLGADYIATGHYAKNTIEGSIGYLFKAKDREKDQTYFLHAVEPEALSKTIFPIGDFTKPQIREFAKQLGLVTHAKKDSTGICFIGEKRFKTFLNEFILAKPGDIKSTGGKTLGQHDGLMFYTLGQRQGLGIGGLQNSTDEPWYVVDKDIASNTLYVAQGSQHPMLYSQGLICGPIHWLADYENHLPLTCFAKTRYRQTDQACMISPPDNNQHYVMFSNPQRAITPGQFIVFYEKNQCLGGATIEQIIR.

ATP-binding positions include 8–15 (GMSGGVDS) and Met34. The interval 94–96 (NPD) is interaction with target base in tRNA. Cys99 (nucleophile) is an active-site residue. Cys99 and Cys195 are oxidised to a cystine. An ATP-binding site is contributed by Gly123. Residues 145-147 (KDQ) are interaction with tRNA. Cys195 functions as the Cysteine persulfide intermediate in the catalytic mechanism. The tract at residues 307 to 308 (RY) is interaction with tRNA.

This sequence belongs to the MnmA/TRMU family.

Its subcellular location is the cytoplasm. It catalyses the reaction S-sulfanyl-L-cysteinyl-[protein] + uridine(34) in tRNA + AH2 + ATP = 2-thiouridine(34) in tRNA + L-cysteinyl-[protein] + A + AMP + diphosphate + H(+). In terms of biological role, catalyzes the 2-thiolation of uridine at the wobble position (U34) of tRNA, leading to the formation of s(2)U34. The polypeptide is tRNA-specific 2-thiouridylase MnmA (Legionella pneumophila (strain Lens)).